The primary structure comprises 507 residues: Glycine, alanine and asparagine-rich protein (507 aa).

The N-terminal stretch at 1-17 (MLRVPLLVLCLALSVGA) is a signal peptide. Positions 158 to 185 (SAQALASATAELQAAQDAYDQASAYAEA) form a coiled coil. The span at 462-498 (GNGNGGNGRNGNGGNGRNGNGGNGGNGNGRNGRGGRY) shows a compositional bias: gly residues. The disordered stretch occupies residues 462–507 (GNGNGGNGRNGNGGNGRNGNGGNGGNGNGRNGRGGRYYYGSSDYYY).

In terms of tissue distribution, component of the acid-soluble and acid-insoluble organic matrix of calcified shell layers (at protein level).

The protein resides in the secreted. The sequence is that of Glycine, alanine and asparagine-rich protein from Haliotis asinina (Donkey's ear abalone).